The primary structure comprises 502 residues: Probable cytosol aminopeptidase (502 aa).

Mn(2+) is bound by residues Lys-267 and Asp-272. The active site involves Lys-279. Mn(2+) is bound by residues Asp-290, Asp-349, and Glu-351. The active site involves Arg-353.

Belongs to the peptidase M17 family. Mn(2+) is required as a cofactor.

Its subcellular location is the cytoplasm. It catalyses the reaction Release of an N-terminal amino acid, Xaa-|-Yaa-, in which Xaa is preferably Leu, but may be other amino acids including Pro although not Arg or Lys, and Yaa may be Pro. Amino acid amides and methyl esters are also readily hydrolyzed, but rates on arylamides are exceedingly low.. The catalysed reaction is Release of an N-terminal amino acid, preferentially leucine, but not glutamic or aspartic acids.. Presumably involved in the processing and regular turnover of intracellular proteins. Catalyzes the removal of unsubstituted N-terminal amino acids from various peptides. The polypeptide is Probable cytosol aminopeptidase (Aeromonas hydrophila subsp. hydrophila (strain ATCC 7966 / DSM 30187 / BCRC 13018 / CCUG 14551 / JCM 1027 / KCTC 2358 / NCIMB 9240 / NCTC 8049)).